A 178-amino-acid polypeptide reads, in one-letter code: Ribosome maturation factor RimP (178 aa).

This sequence belongs to the RimP family.

Its subcellular location is the cytoplasm. Its function is as follows. Required for maturation of 30S ribosomal subunits. This chain is Ribosome maturation factor RimP, found in Caulobacter vibrioides (strain ATCC 19089 / CIP 103742 / CB 15) (Caulobacter crescentus).